Reading from the N-terminus, the 520-residue chain is Ribonuclease Y (520 aa).

Residues I3–M23 traverse the membrane as a helical segment. The KH domain maps to S210–L273. The HD domain occupies V336–A429.

The protein belongs to the RNase Y family.

It localises to the cell membrane. Functionally, endoribonuclease that initiates mRNA decay. The chain is Ribonuclease Y from Geobacter metallireducens (strain ATCC 53774 / DSM 7210 / GS-15).